The chain runs to 169 residues: Methane monooxygenase component A gamma chain (169 aa).

In terms of assembly, m.trichosporium has two forms of methane monooxygenase, a soluble and a membrane-bound type. The soluble type consists of four components (A to D): protein A, comprising three chains, in an alpha-2, beta-2, gamma-2 configuration, is a nonheme iron protein containing an unusual mu-hydroxo bridge structure at its active site and interacts with both oxygen and methane.

It carries out the reaction methane + NADH + O2 + H(+) = methanol + NAD(+) + H2O. It catalyses the reaction methane + NADPH + O2 + H(+) = methanol + NADP(+) + H2O. Its function is as follows. Responsible for the initial oxygenation of methane to methanol in methanotrophs. It also catalyzes the monohydroxylation of a variety of unactivated alkenes, alicyclic, aromatic and heterocyclic compounds. This Methylosinus trichosporium protein is Methane monooxygenase component A gamma chain (mmoZ).